The chain runs to 506 residues: 2,3-bisphosphoglycerate-independent phosphoglycerate mutase (506 aa).

2 residues coordinate Mn(2+): D13 and S63. S63 (phosphoserine intermediate) is an active-site residue. Residues H124, 153 to 154, R183, R189, 254 to 257, and K330 contribute to the substrate site; these read RD and RADR. D396, H400, D437, H438, and H456 together coordinate Mn(2+).

The protein belongs to the BPG-independent phosphoglycerate mutase family. Monomer. Requires Mn(2+) as cofactor.

The enzyme catalyses (2R)-2-phosphoglycerate = (2R)-3-phosphoglycerate. It participates in carbohydrate degradation; glycolysis; pyruvate from D-glyceraldehyde 3-phosphate: step 3/5. Its function is as follows. Catalyzes the interconversion of 2-phosphoglycerate and 3-phosphoglycerate. The polypeptide is 2,3-bisphosphoglycerate-independent phosphoglycerate mutase (Cereibacter sphaeroides (strain KD131 / KCTC 12085) (Rhodobacter sphaeroides)).